Reading from the N-terminus, the 427-residue chain is UDP-N-acetyl-D-mannosamine dehydrogenase (427 aa).

The NAD(+) site is built by Tyr19, Ile20, Asp39, Arg44, Thr91, and Thr130. Arg155, Val156, Lys207, Asn211, Arg214, His245, Arg247, and Gly258 together coordinate UDP-N-acetyl-alpha-D-mannosaminouronate. Lys207 serves as the catalytic Proton donor/acceptor. The Nucleophile role is filled by Cys261. UDP-N-acetyl-alpha-D-mannosaminouronate is bound by residues Tyr318 and Lys319. An NAD(+)-binding site is contributed by Arg326. Lys404 contacts UDP-N-acetyl-alpha-D-mannosaminouronate.

This sequence belongs to the UDP-glucose/GDP-mannose dehydrogenase family. As to quaternary structure, homotetramer; probably dimer of dimers.

The enzyme catalyses UDP-N-acetyl-alpha-D-mannosamine + 2 NAD(+) + H2O = UDP-N-acetyl-alpha-D-mannosaminouronate + 2 NADH + 3 H(+). Its function is as follows. Catalyzes the four-electron oxidation of UDP-N-acetyl-D-mannosamine (UDP-ManNAc), reducing NAD(+) and releasing UDP-N-acetylmannosaminuronic acid (UDP-ManNAcA). Cannot use NADP instead of NAD. In Methanococcus maripaludis (strain DSM 14266 / JCM 13030 / NBRC 101832 / S2 / LL), this protein is UDP-N-acetyl-D-mannosamine dehydrogenase (wecC).